The primary structure comprises 117 residues: Large ribosomal subunit protein bL19 (117 aa).

Belongs to the bacterial ribosomal protein bL19 family.

Functionally, this protein is located at the 30S-50S ribosomal subunit interface and may play a role in the structure and function of the aminoacyl-tRNA binding site. The sequence is that of Large ribosomal subunit protein bL19 from Christiangramia forsetii (strain DSM 17595 / CGMCC 1.15422 / KT0803) (Gramella forsetii).